The primary structure comprises 1960 residues: Nuclear pore complex protein Nup98-Nup96 (1960 aa).

46 tandem repeats follow at residues 2 to 3 (FG), 9 to 10 (FG), 18 to 19 (FG), 30 to 31 (FG), 35 to 36 (FG), 43 to 44 (FG), 59 to 60 (FG), 73 to 74 (FG), 81 to 82 (FG), 92 to 93 (FG), 105 to 106 (FG), 117 to 118 (FG), 125 to 126 (FG), 135 to 136 (FG), 148 to 149 (FG), 160 to 161 (FG), 163 to 164 (FG), 174 to 175 (FG), 264 to 265 (FG), 266 to 267 (FG), 282 to 283 (FG), 293 to 294 (FG), 304 to 305 (FG), 309 to 310 (FG), 319 to 320 (FG), 333 to 334 (FG), 352 to 353 (FG), 358 to 359 (FG), 365 to 366 (FG), 377 to 378 (FG), 384 to 385 (FG), 387 to 388 (FG), 400 to 401 (FG), 413 to 414 (FG), 426 to 427 (FG), 428 to 429 (FG), 441 to 442 (FG), 454 to 455 (FG), 467 to 468 (FG), 493 to 494 (FG), 496 to 497 (FG), 516 to 517 (FG), 527 to 528 (FG), 546 to 547 (FG), 553 to 554 (FG), and 565 to 566 (FG). A 46 X 2 AA repeats of F-G region spans residues 2-566 (FGGAKPSFGA…GGSLGGGGFG (565 aa)). Disordered regions lie at residues 698 to 768 (KSVE…WLHP) and 781 to 860 (TGMD…AANQ). The segment covering 704–718 (NPSSSIGSAPNTPQS) has biased composition (polar residues). Residues 755–768 (ESQDNGRRESWLHP) show a composition bias toward basic and acidic residues. Composition is skewed to polar residues over residues 781-794 (TGMD…STLN) and 806-850 (RPSS…SNRS). Residues 886-1028 (RVGYYTIPSL…GSWVFRVKHF (143 aa)) enclose the Peptidase S59 domain. The active-site Nucleophile is the Ser1029.

Belongs to the nucleoporin GLFG family. In terms of assembly, part of the nuclear pore complex (NPC). Interacts with Rae1. Nuclear pore complex protein Nup98: Interacts with pzg and Chro. Interacts with MBD-R2; the interaction allows Nup98 recruitment to chromatin. Interacts with Trx. Interacts with Wds. Interacts with Mgtor and Cp190. Upon ecdysone stimulation, interacts with EcR, CTCF, su(Hw) and Trl. Post-translationally, isoform A and isoform C are autoproteolytically cleaved to yield Nup98 and Nup96 or Nup98 only, respectively. As to expression, expressed in brain.

The protein resides in the chromosome. Its subcellular location is the nucleus. The protein localises to the nucleoplasm. It is found in the nucleus membrane. It localises to the nuclear pore complex. Part of the nuclear pore complex (NPC). Required for MAD import as part of the Nup107-160 complex and required for nuclear export of Moe probably via its association with Rae1. Plays a role in nuclear mRNA export. Promotes cell antiviral response by up-regulating FoxK-dependent antiviral gene transcription. In germline stem cells, involved in their maintenance and division together with the TGF-Beta and EGFR signaling pathways. In larval lymph glands, has a role in the maintenance of hematopoiesis by regulating Pvr expression. In terms of biological role, part of the nuclear pore complex (NPC). In the nucleoplasm, binds to transcriptionally active chromatin with a preference for regulatory regions; co-localizes with RNA polymerase II in a RNA-independent manner and before transition into transcription elongation. Plays a role in the transcriptional memory process by stabilizing enhancer-promoter loops and by mediating anchoring of chromatin to the nuclear pore complex region. During larval development, interacts with trx and MBD-R2 and regulates transcription of developmental genes including ecdysone-responsive genes such as Eip74 and E23. Functionally, part of the nuclear pore complex (NPC). In Drosophila melanogaster (Fruit fly), this protein is Nuclear pore complex protein Nup98-Nup96.